The primary structure comprises 391 residues: L-tryptophan--pyruvate aminotransferase 1 (391 aa).

Pyridoxal 5'-phosphate is bound by residues tyrosine 58, 100-101 (ST), asparagine 168, 191-194 (DFAY), 214-217 (TFSK), and arginine 225. The residue at position 217 (lysine 217) is an N6-(pyridoxal phosphate)lysine.

This sequence belongs to the alliinase family. Pyridoxal 5'-phosphate serves as cofactor. As to expression, expressed at the leaf margin and in the vasculature of emerging young leaves. Expressed in the quiescent center and in the vasculature of root tips. Detected in the shoot apical meristem, stems, sepals, stamen filaments, the shoot and root junction, the stigma and the base of the silique.

The protein localises to the cytoplasm. It catalyses the reaction L-tryptophan + 2-oxoglutarate = indole-3-pyruvate + L-glutamate. The catalysed reaction is L-tryptophan + pyruvate = indole-3-pyruvate + L-alanine. It functions in the pathway plant hormone metabolism; auxin biosynthesis. With respect to regulation, inhibited by L-kynurenine. Functionally, L-tryptophan aminotransferase involved in auxin (IAA) biosynthesis. Can convert L-tryptophan and pyruvate to indole-3-pyruvic acid (IPA) and alanine. Catalyzes the first step in IPA branch of the auxin biosynthetic pathway. Required for auxin production to initiate multiple change in growth in response to environmental and developmental cues. It is also active with phenylalanine, tyrosine, leucine, alanine, methionine and glutamine. Both TAA1 and TAR2 are required for maintaining proper auxin levels in roots, while TAA1, TAR1 and TAR2 are required for proper embryo patterning. Involved in the maintenance of the root stem cell niches and required for shade avoidance. The polypeptide is L-tryptophan--pyruvate aminotransferase 1 (TAA1) (Arabidopsis thaliana (Mouse-ear cress)).